Consider the following 293-residue polypeptide: Protease HtpX (293 aa).

Transmembrane regions (helical) follow at residues 4-24 (IALF…VLSL) and 32-52 (VTGL…VSLL). H139 is a Zn(2+) binding site. The active site involves E140. A Zn(2+)-binding site is contributed by H143. 2 helical membrane-spanning segments follow: residues 158–178 (VVNT…AGFL) and 193–213 (LIYF…ASII). E222 is a Zn(2+) binding site.

The protein belongs to the peptidase M48B family. Zn(2+) serves as cofactor.

It is found in the cell inner membrane. The protein is Protease HtpX of Cronobacter sakazakii (strain ATCC BAA-894) (Enterobacter sakazakii).